We begin with the raw amino-acid sequence, 1196 residues long: METFTGYLKSTCFHQISPYPPSIMSIQVKVHANILILSFIECLRMPMHRQIRYSLKNNTITYFNESDVDWSSAIDYQCPDCLIGKSTKHRHIKGSRLKYQNSYEPFQYLHTDIFGPVHNLPKSAPSYFISFTDETTKLRWVYPLHDRREDSILDVFTTILAFIKNQFQASVLVIQMDRGSEYTNRTLHKFLEKNGITPCYTTTADSRAHGVAERLNRTLLDDCRTQLQCSGLPNHLWFSAIEFSTIVRNSLASPKSKKSARQHAGLAGLDISTLLPFGQPVIVNDHNPNSKIHPRGIPGYALHPSRNSYGYIIYLPSLKKTVDTTNYVILQGKESRLDQFNYDALTFDEDLNRLTASYHSFIASNEIQESNDLNIESDHDFQSDIELHPEQPRNVLSKAVSPTDSTPPSTHTEDSKRVSKTNIRAPREVDPNISESNILPSKKRSSTPQISNIESTGSGGMHKLNVPLLAPMSQSNTHESSHASKSKDFRHSDSYSENETNHTNVPISSTGGTNNKTVPQISDQETEKRIIHRSPSIDASPPENNSSHNIVPIKTPTTVSEQNTEESIIADLPLPDLPPESPTEFPDPFKELPPINSHQTNSSLGGIGDSNAYTTINSKKRSLEDNETEIKVSRDTWNTKNMRSLEPPRSKKRIHLIAAVKAVKSIKPIRTTLRYDEAITYNKDIKEKEKYIEAYHKEVNQLLKMNTWDTDKYYDRKEIDPKRVINSMFIFNKKRDGTHKARFVARGDIQHPDTYDTGMQSNTVHHYALMTSLSLALDNNYYITQLDISSAYLYADIKEELYIRPPPHLGMNDKLIRLKKSLYGLKQSGANWYETIKSYLIKQCGMEEVRGWSCVFKNSQVTICLFVDDMILFSKDLNANKKIITTLKKQYDTKIINLGESDNEIQYDILGLEIKYQRGKYMKLGMEKSLTEKLPKLNVPLNPKGKKLRAPGQPGLYIDQDELEIDEDEYKEKVHEMQKLIGLASYVGYKFRFDLLYYINTLAQHILFPSRQVLDMTYELIQFMWDTRDKQLIWHKNKPTEPDNKLVAISDASYGNQPYYKSQIGNIYLLNGKVIGGKSTKASLTCTSTTEAEIHAISESVPLLNNLSYLIQELNKKPIIKGLLTDSRSTISIIKSTNEEKFRNRFFGTKAMRLRDEVSGNNLYVYYIETKKNIADVMTKPLPIKTFKLLTNKWIH.

Positions 101-276 (NSYEPFQYLH…AGLDISTLLP (176 aa)) constitute an Integrase catalytic domain. Mg(2+)-binding residues include Asp112 and Asp177. Disordered stretches follow at residues 397–528 (SKAV…ETEK), 533–552 (RSPS…NIVP), and 571–628 (DLPL…DNET). Residues 401–410 (SPTDSTPPST) show a composition bias toward low complexity. Residues 446 to 456 (STPQISNIEST) show a composition bias toward polar residues. Basic and acidic residues predominate over residues 479-494 (ESSHASKSKDFRHSDS). Polar residues-rich tracts occupy residues 495–523 (YSEN…QISD) and 542–552 (PENNSSHNIVP). The Bipartite nuclear localization signal signature appears at 619-653 (KKRSLEDNETEIKVSRDTWNTKNMRSLEPPRSKKR). Residues 779–917 (NNYYITQLDI…DILGLEIKYQ (139 aa)) enclose the Reverse transcriptase Ty1/copia-type domain. 6 residues coordinate Mg(2+): Asp787, Asp868, Asp869, Asp1051, Glu1093, and Asp1126. The RNase H Ty1/copia-type domain maps to 1051 to 1193 (DASYGNQPYY…IKTFKLLTNK (143 aa)).

Initially, virus-like particles (VLPs) are composed of the structural unprocessed proteins Gag and Gag-Pol, and also contain the host initiator methionine tRNA (tRNA(i)-Met) which serves as a primer for minus-strand DNA synthesis, and a dimer of genomic Ty RNA. Processing of the polyproteins occurs within the particle and proceeds by an ordered pathway, called maturation. First, the protease (PR) is released by autocatalytic cleavage of the Gag-Pol polyprotein yielding capsid protein p45 and a Pol-p154 precursor protein. This cleavage is a prerequisite for subsequent processing of Pol-p154 at the remaining sites to release the mature structural and catalytic proteins. Maturation takes place prior to the RT reaction and is required to produce transposition-competent VLPs.

Its subcellular location is the cytoplasm. The protein localises to the nucleus. The catalysed reaction is DNA(n) + a 2'-deoxyribonucleoside 5'-triphosphate = DNA(n+1) + diphosphate. The enzyme catalyses Endonucleolytic cleavage to 5'-phosphomonoester.. Its function is as follows. Reverse transcriptase/ribonuclease H (RT) is a multifunctional enzyme that catalyzes the conversion of the retro-elements RNA genome into dsDNA within the VLP. The enzyme displays a DNA polymerase activity that can copy either DNA or RNA templates, and a ribonuclease H (RNase H) activity that cleaves the RNA strand of RNA-DNA heteroduplexes during plus-strand synthesis and hydrolyzes RNA primers. The conversion leads to a linear dsDNA copy of the retrotransposon that includes long terminal repeats (LTRs) at both ends. Functionally, integrase (IN) targets the VLP to the nucleus, where a subparticle preintegration complex (PIC) containing at least integrase and the newly synthesized dsDNA copy of the retrotransposon must transit the nuclear membrane. Once in the nucleus, integrase performs the integration of the dsDNA into the host genome. This chain is Truncated transposon Ty1-A Gag-Pol polyprotein (TY1B-A), found in Saccharomyces cerevisiae (strain ATCC 204508 / S288c) (Baker's yeast).